The primary structure comprises 372 residues: tRNA pseudouridine synthase D (372 aa).

The Nucleophile role is filled by aspartate 85. The TRUD domain maps to 160 to 330 (GFANYFGYQR…MQGSRRFMWG (171 aa)).

It belongs to the pseudouridine synthase TruD family.

It catalyses the reaction uridine(13) in tRNA = pseudouridine(13) in tRNA. Its function is as follows. Responsible for synthesis of pseudouridine from uracil-13 in transfer RNAs. This chain is tRNA pseudouridine synthase D, found in Campylobacter jejuni subsp. jejuni serotype O:6 (strain 81116 / NCTC 11828).